A 128-amino-acid chain; its full sequence is Small ribosomal subunit protein uS11 (128 aa).

This sequence belongs to the universal ribosomal protein uS11 family. Part of the 30S ribosomal subunit. Interacts with proteins S7 and S18. Binds to IF-3.

Functionally, located on the platform of the 30S subunit, it bridges several disparate RNA helices of the 16S rRNA. Forms part of the Shine-Dalgarno cleft in the 70S ribosome. The chain is Small ribosomal subunit protein uS11 from Chromohalobacter salexigens (strain ATCC BAA-138 / DSM 3043 / CIP 106854 / NCIMB 13768 / 1H11).